Here is an 87-residue protein sequence, read N- to C-terminus: Neutrophil antibiotic peptide NP-3A (87 aa).

The signal sequence occupies residues 1-19 (MRTLTLLTTLLLLALHTQA). A propeptide spanning residues 20–58 (ESPQGSTKEAPDEEQDISVFFGGDKGTALQDAAVKAGVT) is cleaved from the precursor. 3 cysteine pairs are disulfide-bonded: Cys-59-Cys-87, Cys-61-Cys-76, and Cys-66-Cys-86.

Belongs to the alpha-defensin family. Highest expression in bone marrow and to a much lesser extent in small intestine.

It is found in the secreted. Active in vitro against S.aureus, fungi, Gram-positive and Gram-negative bacteria and to a lesser extent against an enveloped virus. The sequence is that of Neutrophil antibiotic peptide NP-3A from Rattus norvegicus (Rat).